We begin with the raw amino-acid sequence, 1136 residues long: Receptor-type guanylate cyclase gcy-4 (1136 aa).

An N-terminal signal peptide occupies residues 1-21 (MRQLNYYIFISTILTYNLTHG). At 22-485 (QGPRPVIRVG…CPLPIFEQYR (464 aa)) the chain is on the extracellular side. Residues Asn40, Asn194, Asn252, Asn351, Asn377, Asn386, and Asn438 are each glycosylated (N-linked (GlcNAc...) asparagine). A helical transmembrane segment spans residues 486–506 (ALVIVAIAVTILILLAIIICM). Topologically, residues 507 to 1136 (SSKIRNRRVE…LRREMMRVEV (630 aa)) are cytoplasmic. The Protein kinase domain occupies 533 to 833 (LPMHRRASKS…EDNLMDHVFS (301 aa)). Residues 536–565 (HRRASKSSQESETESASETENFTSKSGDTM) form a disordered region. The 131-residue stretch at 891-1021 (TVFFSDLVKF…DTVNTASRME (131 aa)) folds into the Guanylate cyclase domain.

This sequence belongs to the adenylyl cyclase class-4/guanylyl cyclase family. In terms of tissue distribution, expression is biased toward ASE right (ASER) sensory neuron.

It localises to the cell membrane. It catalyses the reaction GTP = 3',5'-cyclic GMP + diphosphate. Guanylate cyclase involved in the production of the second messenger cGMP. Regulates chemotaxis responses toward Br(1-) and I(1-) salt ions in ASE right (ASER) sensory neuron. This Caenorhabditis elegans protein is Receptor-type guanylate cyclase gcy-4.